The following is a 526-amino-acid chain: Thioredoxin reductase 2, mitochondrial (526 aa).

A mitochondrion-targeting transit peptide spans 1-36 (MAAIVAALRGSSGRFRPQTRVLTRGTRGAAGAASAA). Residue 43–72 (DLLVIGGGSGGLACAKEAAQLGRKVAVADY) coordinates FAD. Residue Lys-81 is modified to N6-succinyllysine. The cysteines at positions 88 and 93 are disulfide-linked. N6-succinyllysine occurs at positions 177 and 331. The active-site Proton acceptor is His-499. The cysteinyl-selenocysteine (Cys-Sec) cross-link spans 524-525 (CU). Sec-525 is a non-standard amino acid (selenocysteine).

It belongs to the class-I pyridine nucleotide-disulfide oxidoreductase family. As to quaternary structure, homodimer. FAD is required as a cofactor. Expressed in liver, kidney, adrenal gland and heart.

The protein resides in the mitochondrion. The enzyme catalyses [thioredoxin]-dithiol + NADP(+) = [thioredoxin]-disulfide + NADPH + H(+). Its function is as follows. Involved in the control of reactive oxygen species levels and the regulation of mitochondrial redox homeostasis. Maintains mitochondrial thioredoxin in a reduced state. May play a role in redox-regulated cell signaling. In Rattus norvegicus (Rat), this protein is Thioredoxin reductase 2, mitochondrial (Txnrd2).